The sequence spans 116 residues: UPF0102 protein PERMA_0362 (116 aa).

The protein belongs to the UPF0102 family.

This is UPF0102 protein PERMA_0362 from Persephonella marina (strain DSM 14350 / EX-H1).